We begin with the raw amino-acid sequence, 261 residues long: Cytochrome c oxidase subunit 3 (261 aa).

Topologically, residues 1 to 15 are mitochondrial matrix; the sequence is MTHQTHAYHMVDPSP. A helical transmembrane segment spans residues 16–34; the sequence is WPLTGALSALLMTSGLTMW. Residues 35–40 lie on the Mitochondrial intermembrane side of the membrane; it reads FHYHSV. Residues 41 to 66 form a helical membrane-spanning segment; sequence VLLFLGLMTNTLTMFQWWRDVVREGT. At 67–72 the chain is on the mitochondrial matrix side; sequence FQGHHT. A helical transmembrane segment spans residues 73-105; sequence PVVQEGLRYGMILFITSEVLFFTGFFWAFYHSS. The Mitochondrial intermembrane segment spans residues 106-128; that stretch reads LAPTPELGSYWPPVGVYPLNPLE. Residues 129-152 form a helical membrane-spanning segment; sequence VPLLNTSVLLASGVTITWAHHSLM. Topologically, residues 153-155 are mitochondrial matrix; it reads EGN. A helical membrane pass occupies residues 156-183; sequence RKNMLQALLITILLGVYFTLLQMFEYYE. Topologically, residues 184-190 are mitochondrial intermembrane; the sequence is ASFTISD. The chain crosses the membrane as a helical span at residues 191-223; it reads GIYGSTFFVTTGFHGLHVIIGSTFLLTCFIRQL. Residues 224-232 lie on the Mitochondrial matrix side of the membrane; sequence KFHFTSNHH. The chain crosses the membrane as a helical span at residues 233-256; it reads FGFEAAAWYWHFVDVVWLFLYLSI. At 257-261 the chain is on the mitochondrial intermembrane side; the sequence is YWWGS.

The protein belongs to the cytochrome c oxidase subunit 3 family. Component of the cytochrome c oxidase (complex IV, CIV), a multisubunit enzyme composed of 14 subunits. The complex is composed of a catalytic core of 3 subunits MT-CO1, MT-CO2 and MT-CO3, encoded in the mitochondrial DNA, and 11 supernumerary subunits COX4I, COX5A, COX5B, COX6A, COX6B, COX6C, COX7A, COX7B, COX7C, COX8 and NDUFA4, which are encoded in the nuclear genome. The complex exists as a monomer or a dimer and forms supercomplexes (SCs) in the inner mitochondrial membrane with NADH-ubiquinone oxidoreductase (complex I, CI) and ubiquinol-cytochrome c oxidoreductase (cytochrome b-c1 complex, complex III, CIII), resulting in different assemblies (supercomplex SCI(1)III(2)IV(1) and megacomplex MCI(2)III(2)IV(2)).

The protein localises to the mitochondrion inner membrane. The catalysed reaction is 4 Fe(II)-[cytochrome c] + O2 + 8 H(+)(in) = 4 Fe(III)-[cytochrome c] + 2 H2O + 4 H(+)(out). Component of the cytochrome c oxidase, the last enzyme in the mitochondrial electron transport chain which drives oxidative phosphorylation. The respiratory chain contains 3 multisubunit complexes succinate dehydrogenase (complex II, CII), ubiquinol-cytochrome c oxidoreductase (cytochrome b-c1 complex, complex III, CIII) and cytochrome c oxidase (complex IV, CIV), that cooperate to transfer electrons derived from NADH and succinate to molecular oxygen, creating an electrochemical gradient over the inner membrane that drives transmembrane transport and the ATP synthase. Cytochrome c oxidase is the component of the respiratory chain that catalyzes the reduction of oxygen to water. Electrons originating from reduced cytochrome c in the intermembrane space (IMS) are transferred via the dinuclear copper A center (CU(A)) of subunit 2 and heme A of subunit 1 to the active site in subunit 1, a binuclear center (BNC) formed by heme A3 and copper B (CU(B)). The BNC reduces molecular oxygen to 2 water molecules using 4 electrons from cytochrome c in the IMS and 4 protons from the mitochondrial matrix. The protein is Cytochrome c oxidase subunit 3 (MT-CO3) of Mammuthus primigenius (Siberian woolly mammoth).